The sequence spans 354 residues: Guanine nucleotide-binding protein alpha-3 subunit (354 aa).

A lipid anchor (N-myristoyl glycine) is attached at glycine 2. A lipid anchor (S-palmitoyl cysteine) is attached at cysteine 4. A G-alpha domain is found at 33–354 (KECKILLLGS…TNALKDSGIL (322 aa)). The G1 motif stretch occupies residues 36-49 (KILLLGSGESGKST). GTP is bound by residues 41–48 (GSGESGKS), 177–183 (LRARSKT), 202–206 (DVGGQ), 271–274 (NKID), and alanine 326. Serine 48 and threonine 183 together coordinate Mg(2+). A G2 motif region spans residues 175–183 (DVLRARSKT). Positions 198 to 207 (IHLFDVGGQR) are G3 motif. A G4 motif region spans residues 267-274 (ILFLNKID). A G5 motif region spans residues 324-329 (TQATDT).

It belongs to the G-alpha family. In terms of assembly, g proteins are composed of 3 units; alpha, beta and gamma. The alpha chain contains the guanine nucleotide binding site.

Guanine nucleotide-binding proteins (G proteins) are involved as modulators or transducers in various transmembrane signaling systems. GPA3 plays an active role in transmission of the pheromone signal. The polypeptide is Guanine nucleotide-binding protein alpha-3 subunit (GPA3) (Mycosarcoma maydis (Corn smut fungus)).